A 413-amino-acid polypeptide reads, in one-letter code: tRNA (guanine-N(7)-)-methyltransferase non-catalytic subunit WDR4 (413 aa).

Alanine 2 carries the N-acetylalanine modification. WD repeat units follow at residues 61 to 100, 102 to 141, 145 to 185, 188 to 228, and 289 to 329; these read TGSDSILASTFSKSGRYFALTDDSKRLILFRTKPWQCLSV, MVVRRCTALTFTASEDRVLVADKSGDVYSFSVLEPDGCGR, GHLS…IESF, GHTE…QLQC, and TFPH…WQAA. The tract at residues 380–413 is disordered; that stretch reads RLQQQLKKKRQRSPFPGSPEQTKKACPGQSALSC. Phosphoserine occurs at positions 392 and 412.

It belongs to the WD repeat TRM82 family. Non-catalytic component of the METTL1-WDR4 complex, composed of METTL1 and WDR4. Interacts with FEN1; the interaction is direct.

It localises to the nucleus. Its subcellular location is the chromosome. It functions in the pathway tRNA modification; N(7)-methylguanine-tRNA biosynthesis. In terms of biological role, non-catalytic component of the METTL1-WDR4 methyltransferase complex required for the formation of N(7)-methylguanine in a subset of RNA species, such as tRNAs, mRNAs and microRNAs (miRNAs). In the METTL1-WDR4 methyltransferase complex, WDR4 acts as a scaffold for tRNA-binding. Required for the formation of N(7)-methylguanine at position 46 (m7G46) in a large subset of tRNAs that contain the 5'-RAGGU-3' motif within the variable loop. M7G46 interacts with C13-G22 in the D-loop to stabilize tRNA tertiary structure and protect tRNAs from decay. Also required for the formation of N(7)-methylguanine at internal sites in a subset of mRNAs. Also required for methylation of a specific subset of miRNAs, such as let-7. Acts as a regulator of embryonic stem cell self-renewal and differentiation. Independently of METTL1, also plays a role in genome stability: localizes at the DNA replication site and regulates endonucleolytic activities of FEN1. In Mus musculus (Mouse), this protein is tRNA (guanine-N(7)-)-methyltransferase non-catalytic subunit WDR4.